The following is an 803-amino-acid chain: Leucine--tRNA ligase (803 aa).

The 'HIGH' region signature appears at 40-51; it reads PYPSGAGLHVGH. Residues 575–579 carry the 'KMSKS' region motif; that stretch reads KMSKS. Residue K578 participates in ATP binding.

This sequence belongs to the class-I aminoacyl-tRNA synthetase family.

It localises to the cytoplasm. It carries out the reaction tRNA(Leu) + L-leucine + ATP = L-leucyl-tRNA(Leu) + AMP + diphosphate. The chain is Leucine--tRNA ligase from Listeria welshimeri serovar 6b (strain ATCC 35897 / DSM 20650 / CCUG 15529 / CIP 8149 / NCTC 11857 / SLCC 5334 / V8).